A 107-amino-acid chain; its full sequence is Acidic phospholipase A2 2 (107 aa).

Intrachain disulfides connect Cys-26-Cys-100, Cys-28-Cys-38, Cys-37-Cys-82, Cys-43-Cys-107, Cys-44-Cys-75, and Cys-62-Cys-73. Positions 27, 29, and 31 each coordinate Ca(2+). His-41 is a catalytic residue. Asp-42 contacts Ca(2+). Asp-76 is a catalytic residue.

Ca(2+) serves as cofactor. In terms of tissue distribution, expressed by the venom gland.

The protein localises to the secreted. The enzyme catalyses a 1,2-diacyl-sn-glycero-3-phosphocholine + H2O = a 1-acyl-sn-glycero-3-phosphocholine + a fatty acid + H(+). In terms of biological role, PLA2 catalyzes the calcium-dependent hydrolysis of the 2-acyl groups in 3-sn-phosphoglycerides. The sequence is that of Acidic phospholipase A2 2 from Bothrops insularis (Golden lancehead).